The primary structure comprises 344 residues: tRNA N6-adenosine threonylcarbamoyltransferase (344 aa).

Residues H111 and H115 each contribute to the Fe cation site. Substrate-binding positions include L136–G140, D169, G182, and N279. Residue D307 participates in Fe cation binding.

This sequence belongs to the KAE1 / TsaD family. Fe(2+) serves as cofactor.

The protein resides in the cytoplasm. The enzyme catalyses L-threonylcarbamoyladenylate + adenosine(37) in tRNA = N(6)-L-threonylcarbamoyladenosine(37) in tRNA + AMP + H(+). In terms of biological role, required for the formation of a threonylcarbamoyl group on adenosine at position 37 (t(6)A37) in tRNAs that read codons beginning with adenine. Is involved in the transfer of the threonylcarbamoyl moiety of threonylcarbamoyl-AMP (TC-AMP) to the N6 group of A37, together with TsaE and TsaB. TsaD likely plays a direct catalytic role in this reaction. The protein is tRNA N6-adenosine threonylcarbamoyltransferase of Mannheimia succiniciproducens (strain KCTC 0769BP / MBEL55E).